The sequence spans 363 residues: Flagellar P-ring protein 2 (363 aa).

The N-terminal stretch at 1 to 20 is a signal peptide; sequence MKLRTCCISLMLLLALPLQA.

Belongs to the FlgI family. As to quaternary structure, the basal body constitutes a major portion of the flagellar organelle and consists of four rings (L,P,S, and M) mounted on a central rod.

Its subcellular location is the periplasm. The protein localises to the bacterial flagellum basal body. Assembles around the rod to form the L-ring and probably protects the motor/basal body from shearing forces during rotation. This chain is Flagellar P-ring protein 2, found in Photobacterium profundum (strain SS9).